We begin with the raw amino-acid sequence, 292 residues long: Shikimate dehydrogenase (NADP(+)) (292 aa).

Shikimate contacts are provided by residues 22–24 (SLS) and Ser-69. Lys-73 (proton acceptor) is an active-site residue. The shikimate site is built by Asn-94 and Asp-111. NADP(+) is bound by residues 135–139 (GVGGA) and Ile-236. Tyr-238 serves as a coordination point for shikimate. Position 260 (Gly-260) interacts with NADP(+).

This sequence belongs to the shikimate dehydrogenase family. In terms of assembly, homodimer.

The catalysed reaction is shikimate + NADP(+) = 3-dehydroshikimate + NADPH + H(+). The protein operates within metabolic intermediate biosynthesis; chorismate biosynthesis; chorismate from D-erythrose 4-phosphate and phosphoenolpyruvate: step 4/7. Involved in the biosynthesis of the chorismate, which leads to the biosynthesis of aromatic amino acids. Catalyzes the reversible NADPH linked reduction of 3-dehydroshikimate (DHSA) to yield shikimate (SA). In Streptococcus pyogenes serotype M2 (strain MGAS10270), this protein is Shikimate dehydrogenase (NADP(+)).